Consider the following 196-residue polypeptide: Nucleoside triphosphate pyrophosphatase (196 aa).

Asp70 serves as the catalytic Proton acceptor.

This sequence belongs to the Maf family. A divalent metal cation is required as a cofactor.

It localises to the cytoplasm. The catalysed reaction is a ribonucleoside 5'-triphosphate + H2O = a ribonucleoside 5'-phosphate + diphosphate + H(+). The enzyme catalyses a 2'-deoxyribonucleoside 5'-triphosphate + H2O = a 2'-deoxyribonucleoside 5'-phosphate + diphosphate + H(+). Functionally, nucleoside triphosphate pyrophosphatase. May have a dual role in cell division arrest and in preventing the incorporation of modified nucleotides into cellular nucleic acids. The polypeptide is Nucleoside triphosphate pyrophosphatase (Gloeothece citriformis (strain PCC 7424) (Cyanothece sp. (strain PCC 7424))).